Consider the following 782-residue polypeptide: Gelsolin (782 aa).

Positions 1 to 27 are cleaved as a signal peptide; that stretch reads MAPHRPAPALLCALSLALCALSLPVRA. The segment at 53-176 is actin-severing; the sequence is VVEHPEFLKA…YKKGGVASGF (124 aa). Residues 76 to 158 form a Gelsolin-like 1 repeat; it reads FDLVPVPTNL…VQGFESATFL (83 aa). A Phosphotyrosine; by SRC; in vitro modification is found at tyrosine 86. Ca(2+)-binding residues include glycine 92, aspartate 93, glutamate 124, aspartate 136, glycine 141, and alanine 143. Residues 123–126 form an actin-actin interfilament contact point region; the sequence is DESG. 162 to 169 contacts a 1,2-diacyl-sn-glycero-3-phospho-(1D-myo-inositol-4,5-bisphosphate); it reads KSGLKYKK. Valine 172 contributes to the Ca(2+) binding site. 188 to 196 contributes to the a 1,2-diacyl-sn-glycero-3-phospho-(1D-myo-inositol-4,5-bisphosphate) binding site; it reads RLFQVKGRR. Residues 198–270 form a Gelsolin-like 2 repeat; it reads VRATEVPVSW…SEEGTEPEAM (73 aa). Ca(2+)-binding residues include glycine 213 and aspartate 214. Cysteine 215 and cysteine 228 are oxidised to a cystine. Ca(2+) is bound at residue glutamate 236. Positions 247 to 262 are enriched in basic and acidic residues; sequence IRDNERSGRARVHVSE. Residues 247–285 are disordered; sequence IRDNERSGRARVHVSEEGTEPEAMLQVLGPKPALPAGTE. Ca(2+) contacts are provided by aspartate 286, glutamate 329, aspartate 330, and glutamate 354. Residues 317–389 form a Gelsolin-like 3 repeat; it reads DENPFAQGAL…LPEGGETPLF (73 aa). Tyrosine 409 carries the post-translational modification Phosphotyrosine; by SRC; in vitro. The interval 434–782 is actin-binding, Ca-sensitive; that stretch reads AAQHGMDDDG…LDRAMAELAA (349 aa). The Gelsolin-like 4 repeat unit spans residues 455 to 536; that stretch reads SNKVPVDPAT…VQGKEPAHLM (82 aa). The residue at position 465 (tyrosine 465) is a Phosphotyrosine; by SRC. Positions 471, 472, 502, 514, 519, 521, and 551 each coordinate Ca(2+). Residues 576 to 642 form a Gelsolin-like 5 repeat; that stretch reads TRAVEVLPKA…AEGSEPDGFW (67 aa). Lysine 584 is modified (N6-acetyllysine). 2 residues coordinate Ca(2+): asparagine 591 and aspartate 592. Tyrosine 603 carries the post-translational modification Phosphotyrosine; by SRC; in vitro. Glutamate 614 is a binding site for Ca(2+). Tyrosine 651 bears the Phosphotyrosine; by SRC; in vitro mark. Residues 681–756 form a Gelsolin-like 6 repeat; sequence IEEVPGELMQ…VKQGFEPPSF (76 aa). Ca(2+) contacts are provided by aspartate 696, aspartate 697, and glutamate 719. Phosphothreonine is present on threonine 742.

This sequence belongs to the villin/gelsolin family. Binds to actin and to fibronectin. Identified in a complex composed of ACTA1, COBL, GSN and TMSB4X. Interacts with the inactive form of EIF2AK2/PKR. Interacts with FLII. Phosphorylation on Tyr-86, Tyr-409, Tyr-465, Tyr-603 and Tyr-651 in vitro is induced in presence of phospholipids. As to expression, phagocytic cells, platelets, fibroblasts, nonmuscle cells, smooth and skeletal muscle cells.

The protein resides in the cytoplasm. The protein localises to the cytoskeleton. It is found in the secreted. Functionally, calcium-regulated, actin-modulating protein that binds to the plus (or barbed) ends of actin monomers or filaments, preventing monomer exchange (end-blocking or capping). It can promote the assembly of monomers into filaments (nucleation) as well as sever filaments already formed. Plays a role in ciliogenesis. The chain is Gelsolin (GSN) from Homo sapiens (Human).